We begin with the raw amino-acid sequence, 233 residues long: Pirin-like protein YhaK (233 aa).

Belongs to the pirin family. As to quaternary structure, monomer.

It localises to the cytoplasm. Does not have quercetin 2,3-dioxygenase activity. The sequence is that of Pirin-like protein YhaK (yhaK) from Escherichia coli O157:H7.